The sequence spans 252 residues: Phosphate import ATP-binding protein PstB (252 aa).

Residues isoleucine 6–isoleucine 247 form the ABC transporter domain. Residue glycine 38 to serine 45 coordinates ATP.

The protein belongs to the ABC transporter superfamily. Phosphate importer (TC 3.A.1.7) family. The complex is composed of two ATP-binding proteins (PstB), two transmembrane proteins (PstC and PstA) and a solute-binding protein (PstS).

The protein localises to the cell membrane. It catalyses the reaction phosphate(out) + ATP + H2O = ADP + 2 phosphate(in) + H(+). Its function is as follows. Part of the ABC transporter complex PstSACB involved in phosphate import. Responsible for energy coupling to the transport system. This is Phosphate import ATP-binding protein PstB from Moorella thermoacetica (strain ATCC 39073 / JCM 9320).